Here is a 477-residue protein sequence, read N- to C-terminus: MEWEPVIGLEVHVQLRTQSKIFSGAATAYGAEPNTQACAIDLGLPGVLPVLNKEAVKLAVCFGLSVNASIPPYSIFARKNYFYPDLPKGYQISQYNFPIVQNGHLDIENEDGTTKRIGITRAHLEEDAGKSFHEGMQGYSGIDFNRAGTPLLEIVSEPDIRSAQEAVAYLKALHSLVRYIGVSDANMQEGAFRCDVNISLRPKGEEKFGTRAEIKNVNSFRFVERAILFEINRQKEILENGGTIVQETRLYDAVQDETRSMRTKEEAHDYRYFPDPDLLPVEIGPEFIEAVKNQLPELPWEKRKRFAASYQLSNYDVKLLTTQIEIANYFETVLKIDKTIPPKLAANWINGDLAAALNKNNLSITQSPINAEQLASLLHRIADNTLSGSMGKQVFETMWGGEGDADTIIERHGLKQITDTEALEKIIDEVIENNPTQVEQYRSGKDKLIAFFVGQVMKATKGKANPQQVNELFKKKL.

The protein belongs to the GatB/GatE family. GatB subfamily. Heterotrimer of A, B and C subunits.

The catalysed reaction is L-glutamyl-tRNA(Gln) + L-glutamine + ATP + H2O = L-glutaminyl-tRNA(Gln) + L-glutamate + ADP + phosphate + H(+). The enzyme catalyses L-aspartyl-tRNA(Asn) + L-glutamine + ATP + H2O = L-asparaginyl-tRNA(Asn) + L-glutamate + ADP + phosphate + 2 H(+). Its function is as follows. Allows the formation of correctly charged Asn-tRNA(Asn) or Gln-tRNA(Gln) through the transamidation of misacylated Asp-tRNA(Asn) or Glu-tRNA(Gln) in organisms which lack either or both of asparaginyl-tRNA or glutaminyl-tRNA synthetases. The reaction takes place in the presence of glutamine and ATP through an activated phospho-Asp-tRNA(Asn) or phospho-Glu-tRNA(Gln). The protein is Aspartyl/glutamyl-tRNA(Asn/Gln) amidotransferase subunit B of Coxiella burnetii (strain CbuG_Q212) (Coxiella burnetii (strain Q212)).